Reading from the N-terminus, the 579-residue chain is Potassium-transporting ATPase potassium-binding subunit (579 aa).

The next 10 membrane-spanning stretches (helical) occupy residues 1-21, 64-84, 135-155, 178-198, 265-285, 293-313, 398-418, 435-455, 503-523, and 549-569; these read MISN…ACVV, HYAL…YGLQ, GLTV…IGLI, IYIL…QGVV, FLEL…FGLM, WAIL…AVSA, GLYG…LMVG, MAAL…AIAV, WLGI…LAIA, and LLIG…LALG.

It belongs to the KdpA family. The system is composed of three essential subunits: KdpA, KdpB and KdpC.

It localises to the cell membrane. In terms of biological role, part of the high-affinity ATP-driven potassium transport (or Kdp) system, which catalyzes the hydrolysis of ATP coupled with the electrogenic transport of potassium into the cytoplasm. This subunit binds the extracellular potassium ions and delivers the ions to the membrane domain of KdpB through an intramembrane tunnel. This chain is Potassium-transporting ATPase potassium-binding subunit, found in Herpetosiphon aurantiacus (strain ATCC 23779 / DSM 785 / 114-95).